We begin with the raw amino-acid sequence, 365 residues long: Histidinol-phosphate aminotransferase 2 (365 aa).

N6-(pyridoxal phosphate)lysine is present on lysine 222.

The protein belongs to the class-II pyridoxal-phosphate-dependent aminotransferase family. Histidinol-phosphate aminotransferase subfamily. As to quaternary structure, homodimer. The cofactor is pyridoxal 5'-phosphate.

The catalysed reaction is L-histidinol phosphate + 2-oxoglutarate = 3-(imidazol-4-yl)-2-oxopropyl phosphate + L-glutamate. Its pathway is amino-acid biosynthesis; L-histidine biosynthesis; L-histidine from 5-phospho-alpha-D-ribose 1-diphosphate: step 7/9. This Bordetella bronchiseptica (strain ATCC BAA-588 / NCTC 13252 / RB50) (Alcaligenes bronchisepticus) protein is Histidinol-phosphate aminotransferase 2 (hisC2).